Reading from the N-terminus, the 1755-residue chain is Periplakin (1755 aa).

A compositionally biased stretch (basic residues) spans 1–11 (MHSLFRKRNKG). Residues 1 to 20 (MHSLFRKRNKGKYSPTVQTR) form a disordered region. At Ser-14 the chain carries Phosphoserine. Coiled coils occupy residues 16–125 (TVQT…KQMY) and 182–387 (LAKD…QQVV). Spectrin repeat units follow at residues 214–315 (QDYM…SHLK), 321–483 (HQFH…HALQ), and 503–610 (RQLL…EKVD). An SH3 domain is found at 397–453 (LKPIPVEALCDFESDQGLISRGYSYTLQKNNGESWELTDSTGKKLAAPAVCFIIPPT). At Ser-463 the chain carries Phosphoserine. Coiled-coil stretches lie at residues 611-819 (VANR…RNSH) and 883-1644 (LSSG…SVAV). A phosphoserine mark is found at Ser-885, Ser-947, Ser-1583, and Ser-1656. The tract at residues 1556–1755 (ELDFLREENH…ELAVLVSGQK (200 aa)) is interacts with BFSP2 and VIM. Plectin repeat units lie at residues 1650–1684 (ENHL…WKMF) and 1699–1734 (VKGP…AAQY).

This sequence belongs to the plakin or cytolinker family. In terms of assembly, homodimer or a heterodimer with EVPL. Found in a complex composed of PPL (via C-terminal linker domain), BFSP1 and BFSP2 in the retinal lens. Within the complex interacts (via C-terminal linker domain) with BFSP2. Interacts with VIM. Binds to the PH domain of AKT1. Interacts with FCGR1A. May interact with PPHLN1. In terms of tissue distribution, expressed in the retinal lens (at protein level).

It localises to the cell junction. Its subcellular location is the desmosome. It is found in the cytoplasm. The protein localises to the cytoskeleton. The protein resides in the cell membrane. Its function is as follows. Component of the cornified envelope of keratinocytes. May link the cornified envelope to desmosomes and intermediate filaments. May act as a localization signal in PKB/AKT-mediated signaling. The sequence is that of Periplakin (Ppl) from Mus musculus (Mouse).